The sequence spans 196 residues: MIASVRGEVLEVALDHVVIEAAGVGYRVNATPATLATLRQGTEARLITAMIVREDSMTLYGFPDGETRDLFLTLLSVSGVGPRLAMAALAVHDAPALRQVLADGNVAALTRVPGIGKRGAERMVLELRDKVGVAATGGALSTNGHAVRSPVVEALVGLGFAAKQAEEATDTVLAANHDATTSSALRSALSLLGKAR.

Residues 1–63 are domain I; the sequence is MIASVRGEVL…EDSMTLYGFP (63 aa). The domain II stretch occupies residues 64-138; the sequence is DGETRDLFLT…DKVGVAATGG (75 aa). Residues 138–142 form a flexible linker region; that stretch reads GALST. The domain III stretch occupies residues 143–196; the sequence is NGHAVRSPVVEALVGLGFAAKQAEEATDTVLAANHDATTSSALRSALSLLGKAR.

Belongs to the RuvA family. As to quaternary structure, homotetramer. Forms an RuvA(8)-RuvB(12)-Holliday junction (HJ) complex. HJ DNA is sandwiched between 2 RuvA tetramers; dsDNA enters through RuvA and exits via RuvB. An RuvB hexamer assembles on each DNA strand where it exits the tetramer. Each RuvB hexamer is contacted by two RuvA subunits (via domain III) on 2 adjacent RuvB subunits; this complex drives branch migration. In the full resolvosome a probable DNA-RuvA(4)-RuvB(12)-RuvC(2) complex forms which resolves the HJ.

Its subcellular location is the cytoplasm. The RuvA-RuvB-RuvC complex processes Holliday junction (HJ) DNA during genetic recombination and DNA repair, while the RuvA-RuvB complex plays an important role in the rescue of blocked DNA replication forks via replication fork reversal (RFR). RuvA specifically binds to HJ cruciform DNA, conferring on it an open structure. The RuvB hexamer acts as an ATP-dependent pump, pulling dsDNA into and through the RuvAB complex. HJ branch migration allows RuvC to scan DNA until it finds its consensus sequence, where it cleaves and resolves the cruciform DNA. The sequence is that of Holliday junction branch migration complex subunit RuvA from Mycobacterium bovis (strain ATCC BAA-935 / AF2122/97).